Here is a 448-residue protein sequence, read N- to C-terminus: Clusterin (448 aa).

The first 21 residues, 1 to 21, serve as a signal peptide directing secretion; the sequence is MKILLLCVALLLIWDNGMVLG. The Nuclear localization signal signature appears at 77–80; sequence KKKK. 5 disulfide bridges follow: cysteine 101/cysteine 312, cysteine 112/cysteine 304, cysteine 115/cysteine 301, cysteine 120/cysteine 294, and cysteine 128/cysteine 284. Asparagine 102 carries an N-linked (GlcNAc...) asparagine glycan. A Phosphoserine modification is found at serine 132. Asparagine 144, asparagine 290, asparagine 327, asparagine 353, and asparagine 373 each carry an N-linked (GlcNAc...) asparagine glycan. Phosphoserine is present on serine 395. Residues 442–446 carry the Nuclear localization signal motif; that stretch reads RRKSR.

Belongs to the clusterin family. In terms of assembly, antiparallel disulfide-linked heterodimer of an alpha chain and a beta chain. Self-associates and forms higher oligomers. Interacts with a broad range of misfolded proteins, including APP, APOC2 and LYZ. Slightly acidic pH promotes interaction with misfolded proteins. Forms high-molecular weight oligomers upon interaction with misfolded proteins. Interacts with APOA1, LRP2, CLUAP1 and PON1. Interacts with the complement membrane attack complex. Interacts (via alpha chain) with XRCC6. Interacts with SYVN1, COMMD1, BTRC, CUL1 and with ubiquitin and SCF (SKP1-CUL1-F-box protein) E3 ubiquitin-protein ligase complexes. Interacts (via alpha chain) with BAX in stressed cells, where BAX undergoes a conformation change leading to association with the mitochondrial membrane. Does not interact with BAX in unstressed cells. Found in a complex with LTF, CLU, EPPIN and SEMG1. Interacts (immaturely glycosylated pre-secreted form) with HSPA5; this interaction promotes CLU stability and facilitates stress-induced CLU retrotranslocation from the secretory pathway to the mitochondria, thereby reducing stress-induced apoptosis by stabilizing mitochondrial membrane integrity. Interacts with BCL2L1; this interaction releases and activates BAX and promotes cell death. Interacts with TGFBR2 and ACVR1. Interacts (secreted form) with STMN3; this interaction may act as an important modulator during neuronal differentiation. Interacts with VLDLR and LRP8. In terms of processing, proteolytically cleaved on its way through the secretory system, probably within the Golgi lumen. Proteolytic cleavage is not necessary for its chaperone activity. All non-secreted forms are not proteolytically cleaved. Chaperone activity of uncleaved forms is dependent on a non-reducing environment. Polyubiquitinated, leading to proteasomal degradation. Under cellular stress, the intracellular level of cleaved form is reduced due to proteasomal degradation. Post-translationally, extensively glycosylated with sulfated N-linked carbohydrates. About 30% of the protein mass is comprised of complex N-linked carbohydrate. Endoplasmic reticulum (ER) stress induces changes in glycosylation status and increases level of hypoglycosylated forms. Core carbohydrates are essential for chaperone activity. Non-secreted forms are hypoglycosylated or unglycosylated. Most abundant in stomach, liver, brain, and testis, with intermediate levels in heart, ovary and kidney.

It localises to the secreted. The protein resides in the nucleus. The protein localises to the cytoplasm. Its subcellular location is the mitochondrion membrane. It is found in the cytosol. It localises to the microsome. The protein resides in the endoplasmic reticulum. The protein localises to the mitochondrion. Its subcellular location is the perinuclear region. It is found in the cytoplasmic vesicle. It localises to the secretory vesicle. The protein resides in the chromaffin granule. In terms of biological role, functions as extracellular chaperone that prevents aggregation of non native proteins. Prevents stress-induced aggregation of blood plasma proteins. Inhibits formation of amyloid fibrils by APP, APOC2, B2M, CALCA, CSN3, SNCA and aggregation-prone LYZ variants (in vitro). Does not require ATP. Maintains partially unfolded proteins in a state appropriate for subsequent refolding by other chaperones, such as HSPA8/HSC70. Does not refold proteins by itself. Binding to cell surface receptors triggers internalization of the chaperone-client complex and subsequent lysosomal or proteasomal degradation. When secreted, protects cells against apoptosis and against cytolysis by complement: inhibits assembly of the complement membrane attack complex (MAC) by preventing polymerization of C9 pore component of the MAC complex. Intracellular forms interact with ubiquitin and SCF (SKP1-CUL1-F-box protein) E3 ubiquitin-protein ligase complexes and promote the ubiquitination and subsequent proteasomal degradation of target proteins. Promotes proteasomal degradation of COMMD1 and IKBKB. Modulates NF-kappa-B transcriptional activity. Following stress, promotes apoptosis. Inhibits apoptosis when associated with the mitochondrial membrane by interference with BAX-dependent release of cytochrome c into the cytoplasm. Plays a role in the regulation of cell proliferation. Following ER stress, suppresses stress-induced apoptosis by stabilizing mitochondrial membrane integrity through interaction with HSPA5. When secreted, does not affect caspase or BAX-mediated intrinsic apoptosis and TNF-induced NF-kappa-B-activity. When secreted, acts as an important modulator during neuronal differentiation through interaction with STMN3. Plays a role in the clearance of immune complexes that arise during cell injury. This is Clusterin from Mus musculus (Mouse).